Consider the following 95-residue polypeptide: Signal recognition particle 19 kDa protein (95 aa).

The protein belongs to the SRP19 family. As to quaternary structure, part of the signal recognition particle protein translocation system, which is composed of SRP and FtsY. Archaeal SRP consists of a 7S RNA molecule of 300 nucleotides and two protein subunits: SRP54 and SRP19.

The protein resides in the cytoplasm. Its function is as follows. Involved in targeting and insertion of nascent membrane proteins into the cytoplasmic membrane. Binds directly to 7S RNA and mediates binding of the 54 kDa subunit of the SRP. In Pyrobaculum islandicum (strain DSM 4184 / JCM 9189 / GEO3), this protein is Signal recognition particle 19 kDa protein.